Consider the following 434-residue polypeptide: Adenylosuccinate synthetase (434 aa).

GTP is bound by residues 22-28 (GDEGKGK) and 50-52 (GHT). The Proton acceptor role is filled by D23. Mg(2+)-binding residues include D23 and G50. IMP-binding positions include 23–26 (DEGK), 48–51 (NAGH), T139, R153, Q234, T249, and R313. H51 (proton donor) is an active-site residue. 309 to 315 (ATTGRKR) provides a ligand contact to substrate. Residues R315, 341-343 (KLD), and 423-425 (SVG) each bind GTP.

Belongs to the adenylosuccinate synthetase family. Homodimer. Mg(2+) serves as cofactor.

It is found in the cytoplasm. The catalysed reaction is IMP + L-aspartate + GTP = N(6)-(1,2-dicarboxyethyl)-AMP + GDP + phosphate + 2 H(+). The protein operates within purine metabolism; AMP biosynthesis via de novo pathway; AMP from IMP: step 1/2. Its function is as follows. Plays an important role in the de novo pathway of purine nucleotide biosynthesis. Catalyzes the first committed step in the biosynthesis of AMP from IMP. The chain is Adenylosuccinate synthetase from Chlorobium phaeovibrioides (strain DSM 265 / 1930) (Prosthecochloris vibrioformis (strain DSM 265)).